Here is a 1410-residue protein sequence, read N- to C-terminus: SNF2 domain-containing protein CLASSY 3 (1410 aa).

The span at 1–12 (MECIGKRVKSRS) shows a compositional bias: basic residues. Disordered stretches follow at residues 1-74 (MECI…SVPN), 87-108 (DLNV…SEQN), 209-330 (GEIE…PIKR), 344-376 (RSGS…QREV), 428-593 (NVSK…LKDK), and 632-654 (EDEA…REDH). The short motif at 22 to 29 (RKKMETVA) is the Nuclear localization signal 1 element. The segment covering 95–108 (GPSSSRLTDGSEQN) has biased composition (polar residues). Residues 245 to 266 (SDGEDSSSETDEEEEENQDSED) show a composition bias toward acidic residues. Residues 248–278 (EDSSSETDEEEEENQDSEDNNTKDNVTVESL) are a coiled coil. Over residues 276–301 (ESLSSEDPSSSSSSSSSSSSSSSSSS) the composition is skewed to low complexity. The span at 306–323 (SYVKEVVGDNRDDDDLRK) shows a compositional bias: basic and acidic residues. The short motif at 328–335 (IKRVSLVE) is the Nuclear localization signal 2 element. Positions 351–376 (KPRERDNKIQKLNHREEEKKERQREV) are enriched in basic and acidic residues. The stretch at 356-377 (DNKIQKLNHREEEKKERQREVV) forms a coiled coil. The span at 428 to 446 (NVSKYEDSVSINSGKTTGA) shows a compositional bias: polar residues. 2 stretches are compositionally biased toward basic and acidic residues: residues 450–463 (PEVE…ELNT) and 488–504 (EPSR…KEVQ). Residues 576-587 (SSISSGDGYESD) show a composition bias toward low complexity. A Helicase ATP-binding domain is found at 850 to 1060 (FENSDETGGC…CNVLGLARPK (211 aa)). 863-870 (HAPGTGKT) contacts ATP. The DEAH box motif lies at 1011–1014 (DEAH). The short motif at 1132–1139 (QRRVLESI) is the Nuclear localization signal 3 element. Residues 1206–1359 (EFVELCEVIK…ELVFACSSRH (154 aa)) enclose the Helicase C-terminal domain.

It belongs to the SNF2/RAD54 helicase family. Interacts with NRPD1.

The protein localises to the nucleus. Functionally, probable chromatin remodeling factor. This Arabidopsis thaliana (Mouse-ear cress) protein is SNF2 domain-containing protein CLASSY 3 (CLSY3).